A 551-amino-acid polypeptide reads, in one-letter code: Solute carrier family 22 member 3 (551 aa).

A helical membrane pass occupies residues 21-41 (VFLLLCLTGVTFAFLFVGVVF). Residues Asn72, Asn99, and Asn114 are each glycosylated (N-linked (GlcNAc...) asparagine). Residues 177–197 (LIIYLISCFGVGITGVVVAFA) traverse the membrane as a helical segment. Residue Asn199 is glycosylated (N-linked (GlcNAc...) asparagine). 2 helical membrane passes run 236–256 (IVGI…PGIA) and 264–284 (GIQL…WVVP). The Proline-rich sequence signature appears at 284–288 (PESPR). Asn317 is a glycosylation site (N-linked (GlcNAc...) asparagine). The next 3 helical transmembrane spans lie at 376 to 396 (IDFF…LLTI), 464 to 484 (GVSL…FLLF), and 493 to 513 (LPLI…MLLP).

This sequence belongs to the major facilitator (TC 2.A.1) superfamily. Organic cation transporter (TC 2.A.1.19) family. In terms of tissue distribution, highly expressed in placenta. Highly expressed in kidney cortex. In kidney, expressed specifically in the proximal and distal convoluted tubules and within Bowman capsule. Expressed in brain, particularly in dopaminergic neurons of the substantia nigra compacta, non-aminergic neurons of the ventral tegmental area, substantia nigra reticulata, locus coeruleus, hippocampus and cortex. In brain, also detected in astrocytes in the substantia nigra reticulata, several hypothalamic nuclei and nigrostriatal region. Expressed in neurons and glial cells of amygdala.

The protein localises to the cell membrane. It is found in the apical cell membrane. The protein resides in the basolateral cell membrane. Its subcellular location is the mitochondrion membrane. It localises to the endomembrane system. The protein localises to the nucleus membrane. It is found in the nucleus outer membrane. It carries out the reaction (R)-noradrenaline(out) = (R)-noradrenaline(in). The enzyme catalyses (R)-adrenaline(out) = (R)-adrenaline(in). The catalysed reaction is serotonin(out) = serotonin(in). It catalyses the reaction dopamine(out) = dopamine(in). It carries out the reaction histamine(out) = histamine(in). The enzyme catalyses tyramine(in) = tyramine(out). The catalysed reaction is guanidine(out) = guanidine(in). It catalyses the reaction agmatine(out) = agmatine(in). It carries out the reaction spermidine(in) = spermidine(out). The enzyme catalyses L-histidyl-L-proline diketopiperazine(in) = L-histidyl-L-proline diketopiperazine(out). The catalysed reaction is (R)-salsolinol(in) = (R)-salsolinol(out). Its function is as follows. Electrogenic voltage-dependent transporter that mediates the transport of a variety of organic cations such as endogenous bioactive amines, cationic drugs and xenobiotics. Cation cellular uptake or release is driven by the electrochemical potential, i.e. membrane potential and concentration gradient. Functions as a Na(+)- and Cl(-)-independent, bidirectional uniporter. Implicated in monoamine neurotransmitters uptake such as dopamine, adrenaline/epinephrine, noradrenaline/norepinephrine, homovanillic acid, histamine, serotonin and tyramine, thereby supporting a role in homeostatic regulation of aminergic neurotransmission in the brain. Transports dopaminergic neuromodulators cyclo(his-pro) and salsolinol with low efficiency. May be involved in the uptake and disposition of cationic compounds by renal clearance from the blood flow. May contribute to regulate the transport of cationic compounds in testis across the blood-testis-barrier. Mediates the transport of polyamine spermidine and putrescine. Mediates the bidirectional transport of polyamine agmatine. Also transports guanidine. May also mediate intracellular transport of organic cations, thereby playing a role in amine metabolism and intracellular signaling. The polypeptide is Solute carrier family 22 member 3 (Mus musculus (Mouse)).